A 468-amino-acid polypeptide reads, in one-letter code: uncharacterized protein (468 aa).

Coiled-coil stretches lie at residues 10 to 94 (NEAL…VKEL) and 147 to 279 (FVEL…EASI). Residues 324-369 (TPRTVDPIPEGTIIKKESSDDAMFSGLKKSKPKKSNKSNNNQADSD) are disordered. S342 is subject to Phosphoserine. Residues 399-445 (VEQLKSRIAHFKEQQDSVTKQRIEKAKQEIEKLEAKYNSKEEKTLTE) adopt a coiled-coil conformation.

Its subcellular location is the cytoplasm. This is an uncharacterized protein from Schizosaccharomyces pombe (strain 972 / ATCC 24843) (Fission yeast).